The following is a 259-amino-acid chain: 1,2-dihydroxy-1,2-dihydronaphthalene dehydrogenase (259 aa).

8-32 (SITGAGSGIGLELVRSFKSAGYYVS) provides a ligand contact to NAD(+). Ser140 provides a ligand contact to substrate. Tyr153 serves as the catalytic Proton acceptor.

Belongs to the short-chain dehydrogenases/reductases (SDR) family.

It carries out the reaction (1R,2S)-1,2-dihydronaphthalene-1,2-diol + NAD(+) = naphthalene-1,2-diol + NADH + H(+). The enzyme catalyses cis-1,2-dihydroxy-1,2-dihydrodibenzothiophene + NAD(+) = 1,2-dihydroxydibenzothiophene + NADH + H(+). The protein operates within aromatic compound metabolism; naphthalene degradation. Catalyzes the oxidation of naphthalene dihydrodiol into 1,2-dihydroxynaphthalene. The protein is 1,2-dihydroxy-1,2-dihydronaphthalene dehydrogenase (doxE) of Pseudomonas sp. (strain C18).